Here is a 475-residue protein sequence, read N- to C-terminus: tRNA modification GTPase MnmE (475 aa).

(6S)-5-formyl-5,6,7,8-tetrahydrofolate is bound by residues arginine 24, glutamate 81, and lysine 124. The region spanning glycine 220–glycine 397 is the TrmE-type G domain. Asparagine 230 is a K(+) binding site. GTP is bound by residues asparagine 230 to serine 235, threonine 249 to threonine 255, aspartate 274 to glycine 277, and serine 378 to arginine 380. Serine 234 contributes to the Mg(2+) binding site. Positions 249, 251, and 254 each coordinate K(+). Threonine 255 serves as a coordination point for Mg(2+). A (6S)-5-formyl-5,6,7,8-tetrahydrofolate-binding site is contributed by lysine 475.

The protein belongs to the TRAFAC class TrmE-Era-EngA-EngB-Septin-like GTPase superfamily. TrmE GTPase family. In terms of assembly, homodimer. Heterotetramer of two MnmE and two MnmG subunits. K(+) is required as a cofactor.

Its subcellular location is the cytoplasm. Its function is as follows. Exhibits a very high intrinsic GTPase hydrolysis rate. Involved in the addition of a carboxymethylaminomethyl (cmnm) group at the wobble position (U34) of certain tRNAs, forming tRNA-cmnm(5)s(2)U34. This is tRNA modification GTPase MnmE from Cupriavidus necator (strain ATCC 17699 / DSM 428 / KCTC 22496 / NCIMB 10442 / H16 / Stanier 337) (Ralstonia eutropha).